The sequence spans 153 residues: Aspartate carbamoyltransferase regulatory chain (153 aa).

4 residues coordinate Zn(2+): Cys109, Cys114, Cys138, and Cys141.

This sequence belongs to the PyrI family. In terms of assembly, contains catalytic and regulatory chains. It depends on Zn(2+) as a cofactor.

In terms of biological role, involved in allosteric regulation of aspartate carbamoyltransferase. The chain is Aspartate carbamoyltransferase regulatory chain from Salmonella newport (strain SL254).